The chain runs to 443 residues: Dihydroorotase (443 aa).

Zn(2+)-binding residues include H80 and H82. Substrate-binding positions include 82–84 (HFR) and N114. Residues D170, H197, and H251 each coordinate Zn(2+). N297 is a substrate binding site. Position 324 (D324) interacts with Zn(2+). Residue D324 is part of the active site. Substrate is bound by residues H328 and 342–343 (FG).

Belongs to the metallo-dependent hydrolases superfamily. DHOase family. Class I DHOase subfamily. It depends on Zn(2+) as a cofactor.

It carries out the reaction (S)-dihydroorotate + H2O = N-carbamoyl-L-aspartate + H(+). The protein operates within pyrimidine metabolism; UMP biosynthesis via de novo pathway; (S)-dihydroorotate from bicarbonate: step 3/3. Catalyzes the reversible cyclization of carbamoyl aspartate to dihydroorotate. The chain is Dihydroorotase from Wolbachia sp. subsp. Brugia malayi (strain TRS).